An 879-amino-acid chain; its full sequence is Mediator of RNA polymerase II transcription subunit 14 (879 aa).

This sequence belongs to the Mediator complex subunit 14 family. In terms of assembly, component of the Mediator complex.

It localises to the nucleus. Component of the Mediator complex, a coactivator involved in the regulated transcription of nearly all RNA polymerase II-dependent genes. Mediator functions as a bridge to convey information from gene-specific regulatory proteins to the basal RNA polymerase II transcription machinery. Mediator is recruited to promoters by direct interactions with regulatory proteins and serves as a scaffold for the assembly of a functional preinitiation complex with RNA polymerase II and the general transcription factors. The sequence is that of Mediator of RNA polymerase II transcription subunit 14 (med14) from Schizosaccharomyces pombe (strain 972 / ATCC 24843) (Fission yeast).